Here is a 103-residue protein sequence, read N- to C-terminus: MAAISINVSTVKPLGDRIFVKVSPAEEKTAGGILLPDNAQEKPQIGEVVAVGPGKRNDDGSRSELDVKVGDKVLYSKYAGTDVKLSGEDYVLLSEKDILASVA.

This sequence belongs to the GroES chaperonin family. In terms of assembly, heptamer of 7 subunits arranged in a ring. Interacts with the chaperonin GroEL.

It is found in the cytoplasm. In terms of biological role, together with the chaperonin GroEL, plays an essential role in assisting protein folding. The GroEL-GroES system forms a nano-cage that allows encapsulation of the non-native substrate proteins and provides a physical environment optimized to promote and accelerate protein folding. GroES binds to the apical surface of the GroEL ring, thereby capping the opening of the GroEL channel. The polypeptide is Co-chaperonin GroES (Crocosphaera subtropica (strain ATCC 51142 / BH68) (Cyanothece sp. (strain ATCC 51142))).